We begin with the raw amino-acid sequence, 268 residues long: MYKDIKVDPAQLEAALDARLKIRAGFDKPTAGMAAGMTQVNMISVPKEWAYDFLLYAHRNPQSCPVLDVLEEGIYATKLAADSDIRTDFPRYRIWKDGEMVDEVTDAREIYNAHPDLVTFLIGCSFSFETALQEAGIEVRHIHDDTNVPMYLSNIECEPAGRISGNMVVSMRPIPSHQISEAVKITARMPSVHGAPVHIGHPESLGISDVNKPDFGDASRIEAGEIPVFWACGVTPQAAVMNSKIPFAISHAPGYMFITDIPDRAWMG.

This sequence belongs to the D-glutamate cyclase family.

In Acinetobacter baumannii (strain ACICU), this protein is Putative hydro-lyase ACICU_01268.